A 172-amino-acid polypeptide reads, in one-letter code: MDLKSLIRDIPDFPKPGILFRDITTLLNHPEGMRYTMDALVQLCLEANLKPDHVVGMESRGFIFGPTLAYNLNAGFVPVRKPGKLLAAVHTVEYELEYGTDTLEIHQDAVGSGDKIVIVDDLIATGGTAKATAELLTKIGCDIIGFVFIVELLDLKGRDRLPDAPVLSLIQY.

The protein belongs to the purine/pyrimidine phosphoribosyltransferase family. In terms of assembly, homodimer.

The protein resides in the cytoplasm. It catalyses the reaction AMP + diphosphate = 5-phospho-alpha-D-ribose 1-diphosphate + adenine. It participates in purine metabolism; AMP biosynthesis via salvage pathway; AMP from adenine: step 1/1. Functionally, catalyzes a salvage reaction resulting in the formation of AMP, that is energically less costly than de novo synthesis. The protein is Adenine phosphoribosyltransferase of Picosynechococcus sp. (strain ATCC 27264 / PCC 7002 / PR-6) (Agmenellum quadruplicatum).